The following is a 236-amino-acid chain: H2HPP isomerase (236 aa).

Cupin type-2 domains are found at residues 40 to 106 (YVPP…AIDI) and 151 to 215 (NIPG…SKSV). A divalent metal cation-binding residues include His50, His52, Gln56, His91, His162, His164, Gln168, and His202. Tyr223 contacts substrate.

As to quaternary structure, monomer. The cofactor is Fe(2+). It depends on Co(2+) as a cofactor.

Its subcellular location is the cytoplasm. The catalysed reaction is 3-[(4R)-4-hydroxycyclohexa-1,5-dien-1-yl]-2-oxopropanoate = 3-[(1E,4R)-4-hydroxycyclohex-2-en-1-ylidene]pyruvate. It participates in antibiotic biosynthesis; bacilysin biosynthesis. Functionally, part of the bacABCDEF operon responsible for the biosynthesis of the nonribosomally synthesized dipeptide antibiotic bacilysin, composed of L-alanine and L-anticapsin. Bacilysin is an irreversible inactivator of the glutaminase domain of glucosamine synthetase. BacB catalyzes the allylic isomerization of the endocyclic-delta(4),delta(8)-7R-dihydro-hydroxyphenylpyruvate (en-H2HPP) to generate a mixture of 3E,7R- and 3Z, 7R-olefins of the exocyclic-delta(3),delta(5)-dihydro-hydroxyphenylpyruvate (ex-H2HPP). The protein is H2HPP isomerase of Bacillus amyloliquefaciens (Bacillus velezensis).